The sequence spans 130 residues: Mini-ribonuclease 3 (130 aa).

Aspartate 19 is an active-site residue. Positions 69–91 are disordered; the sequence is EQDVVRRGRNAKGHGAPKSADPA.

It belongs to the MrnC RNase family. Homodimer. Requires Mg(2+) as cofactor.

It is found in the cytoplasm. Functionally, involved in correct processing of both the 5' and 3' ends of 23S rRNA precursor. Processes 30S rRNA precursor transcript even in absence of ribonuclease 3 (Rnc); Rnc processes 30S rRNA into smaller rRNA precursors. The protein is Mini-ribonuclease 3 of Symbiobacterium thermophilum (strain DSM 24528 / JCM 14929 / IAM 14863 / T).